The sequence spans 231 residues: Orotidine 5'-phosphate decarboxylase (231 aa).

Substrate contacts are provided by residues Asp-11, Lys-33, 60 to 69, Thr-120, Arg-181, Gln-190, Gly-210, and Arg-211; that span reads DLKFHDIPNT. Residue Lys-62 is the Proton donor of the active site.

Belongs to the OMP decarboxylase family. Type 1 subfamily. In terms of assembly, homodimer.

It carries out the reaction orotidine 5'-phosphate + H(+) = UMP + CO2. Its pathway is pyrimidine metabolism; UMP biosynthesis via de novo pathway; UMP from orotate: step 2/2. In terms of biological role, catalyzes the decarboxylation of orotidine 5'-monophosphate (OMP) to uridine 5'-monophosphate (UMP). In Vibrio cholerae serotype O1 (strain ATCC 39541 / Classical Ogawa 395 / O395), this protein is Orotidine 5'-phosphate decarboxylase.